The primary structure comprises 242 residues: NAD(P)H-quinone oxidoreductase subunit K (242 aa).

Positions 59, 60, 124, and 155 each coordinate [4Fe-4S] cluster.

It belongs to the complex I 20 kDa subunit family. In terms of assembly, NDH-1 can be composed of about 15 different subunits; different subcomplexes with different compositions have been identified which probably have different functions. [4Fe-4S] cluster serves as cofactor.

The protein localises to the cellular thylakoid membrane. It carries out the reaction a plastoquinone + NADH + (n+1) H(+)(in) = a plastoquinol + NAD(+) + n H(+)(out). The catalysed reaction is a plastoquinone + NADPH + (n+1) H(+)(in) = a plastoquinol + NADP(+) + n H(+)(out). NDH-1 shuttles electrons from an unknown electron donor, via FMN and iron-sulfur (Fe-S) centers, to quinones in the respiratory and/or the photosynthetic chain. The immediate electron acceptor for the enzyme in this species is believed to be plastoquinone. Couples the redox reaction to proton translocation, and thus conserves the redox energy in a proton gradient. Cyanobacterial NDH-1 also plays a role in inorganic carbon-concentration. The protein is NAD(P)H-quinone oxidoreductase subunit K of Synechococcus sp. (strain RCC307).